A 541-amino-acid chain; its full sequence is 5' exonuclease Apollo (541 aa).

Residue lysine 334 forms a Glycyl lysine isopeptide (Lys-Gly) (interchain with G-Cter in SUMO2) linkage. Positions 455-475 (PLLSRGDSGSPARGNQSDCVG) are disordered. Residues 492-507 (ESRGLALKYLLTPVHF) carry the TBM motif.

The protein belongs to the DNA repair metallo-beta-lactamase (DRMBL) family. Interacts with MUS81, MRE11 and FANCD2. Interacts with HSPA2, HSPA8 and HSPA14. Interacts with SPAG5. Interacts with TERF2; the interaction is direct. In terms of processing, ubiquitinated, leading to its degradation. Interaction with TERF2 protects it from ubiquitination.

It localises to the chromosome. It is found in the telomere. Its subcellular location is the nucleus. The protein resides in the cytoplasm. The protein localises to the cytoskeleton. It localises to the microtubule organizing center. It is found in the centrosome. The enzyme catalyses a beta-lactam + H2O = a substituted beta-amino acid. In terms of biological role, 5'-3' exonuclease that plays a central role in telomere maintenance and protection during S-phase. Participates in the protection of telomeres against non-homologous end-joining (NHEJ)-mediated repair, thereby ensuring that telomeres do not fuse. Plays a key role in telomeric loop (T loop) formation by being recruited by TERF2 at the leading end telomeres and by processing leading-end telomeres immediately after their replication via its exonuclease activity: generates 3' single-stranded overhang at the leading end telomeres avoiding blunt leading-end telomeres that are vulnerable to end-joining reactions and expose the telomere end in a manner that activates the DNA repair pathways. Together with TERF2, required to protect telomeres from replicative damage during replication by controlling the amount of DNA topoisomerase (TOP1, TOP2A and TOP2B) needed for telomere replication during fork passage and prevent aberrant telomere topology. Also involved in response to DNA damage: plays a role in response to DNA interstrand cross-links (ICLs) by facilitating double-strand break formation. In case of spindle stress, involved in prophase checkpoint. Possesses beta-lactamase activity, catalyzing the hydrolysis of penicillin G and nitrocefin. Exhibits no activity towards other beta-lactam antibiotic classes including cephalosporins (cefotaxime) and carbapenems (imipenem). The chain is 5' exonuclease Apollo (Dclre1b) from Mus musculus (Mouse).